The following is a 409-amino-acid chain: Elongation factor Tu, chloroplastic (409 aa).

In terms of domain architecture, tr-type G spans lysine 10–glutamate 214. The G1 stretch occupies residues glycine 19–threonine 26. Glycine 19 to threonine 26 is a binding site for GTP. Threonine 26 is a binding site for Mg(2+). A G2 region spans residues glycine 60–asparagine 64. A G3 region spans residues aspartate 81–glycine 84. GTP contacts are provided by residues aspartate 81–histidine 85 and asparagine 136–aspartate 139. Residues asparagine 136–aspartate 139 are G4. The segment at serine 174–leucine 176 is G5.

Belongs to the TRAFAC class translation factor GTPase superfamily. Classic translation factor GTPase family. EF-Tu/EF-1A subfamily.

It is found in the plastid. Its subcellular location is the chloroplast. It catalyses the reaction GTP + H2O = GDP + phosphate + H(+). Its function is as follows. GTP hydrolase that promotes the GTP-dependent binding of aminoacyl-tRNA to the A-site of ribosomes during protein biosynthesis. The sequence is that of Elongation factor Tu, chloroplastic (tufA) from Rhodomonas salina (Cryptomonas salina).